A 59-amino-acid chain; its full sequence is Large ribosomal subunit protein bL32 (59 aa).

The disordered stretch occupies residues 1-59 (MAVQQNRKTPSKRGMRRSHDSLSKPTLSTEQNTGETHRRHHISADGYYRGRKVTRGQDD). The span at 23-34 (SKPTLSTEQNTG) shows a compositional bias: polar residues. The span at 49 to 59 (RGRKVTRGQDD) shows a compositional bias: basic residues.

It belongs to the bacterial ribosomal protein bL32 family.

The polypeptide is Large ribosomal subunit protein bL32 (Halorhodospira halophila (strain DSM 244 / SL1) (Ectothiorhodospira halophila (strain DSM 244 / SL1))).